A 91-amino-acid chain; its full sequence is Large ribosomal subunit protein eL37 (91 aa).

4 residues coordinate Zn(2+): cysteine 19, cysteine 22, cysteine 34, and cysteine 37. The C4-type zinc-finger motif lies at 19–37; sequence CRRCGKSSFHIQKKTCASC.

This sequence belongs to the eukaryotic ribosomal protein eL37 family. It depends on Zn(2+) as a cofactor.

In terms of biological role, binds to the 23S rRNA. The polypeptide is Large ribosomal subunit protein eL37 (rpl37) (Dictyostelium discoideum (Social amoeba)).